The primary structure comprises 292 residues: Probable xyloglucan endotransglucosylase/hydrolase protein 6 (292 aa).

The N-terminal stretch at 1 to 30 (MAKIYSPSFPGTLCLCIFTLLTLMFIRVSA) is a signal peptide. Residues 31–224 (RPATFVEDFK…WSKAPFYAYY (194 aa)) form the GH16 domain. Catalysis depends on E110, which acts as the Nucleophile. E114 acts as the Proton donor in catalysis. E114 provides a ligand contact to xyloglucan. N-linked (GlcNAc...) asparagine glycosylation occurs at N118. Residues 127-129 (QTN), 137-139 (DRE), 203-204 (DW), and G208 contribute to the xyloglucan site. 2 disulfides stabilise this stretch: C232–C240 and C277–C290. A xyloglucan-binding site is contributed by R282.

It belongs to the glycosyl hydrolase 16 family. XTH group 1 subfamily. Post-translationally, contains at least one intrachain disulfide bond essential for its enzymatic activity.

It is found in the secreted. The protein localises to the cell wall. It localises to the extracellular space. Its subcellular location is the apoplast. The enzyme catalyses breaks a beta-(1-&gt;4) bond in the backbone of a xyloglucan and transfers the xyloglucanyl segment on to O-4 of the non-reducing terminal glucose residue of an acceptor, which can be a xyloglucan or an oligosaccharide of xyloglucan.. Catalyzes xyloglucan endohydrolysis (XEH) and/or endotransglycosylation (XET). Cleaves and religates xyloglucan polymers, an essential constituent of the primary cell wall, and thereby participates in cell wall construction of growing tissues. The polypeptide is Probable xyloglucan endotransglucosylase/hydrolase protein 6 (XTH6) (Arabidopsis thaliana (Mouse-ear cress)).